The primary structure comprises 130 residues: Transcription antitermination protein NusB (130 aa).

This sequence belongs to the NusB family.

Its function is as follows. Involved in transcription antitermination. Required for transcription of ribosomal RNA (rRNA) genes. Binds specifically to the boxA antiterminator sequence of the ribosomal RNA (rrn) operons. The protein is Transcription antitermination protein NusB of Geobacillus kaustophilus (strain HTA426).